The sequence spans 135 residues: Ribosome-binding factor A (135 aa).

Belongs to the RbfA family. As to quaternary structure, monomer. Binds 30S ribosomal subunits, but not 50S ribosomal subunits or 70S ribosomes.

The protein localises to the cytoplasm. One of several proteins that assist in the late maturation steps of the functional core of the 30S ribosomal subunit. Associates with free 30S ribosomal subunits (but not with 30S subunits that are part of 70S ribosomes or polysomes). Required for efficient processing of 16S rRNA. May interact with the 5'-terminal helix region of 16S rRNA. The sequence is that of Ribosome-binding factor A from Aliivibrio fischeri (strain MJ11) (Vibrio fischeri).